A 254-amino-acid chain; its full sequence is Ciliary microtubule associated protein 1A (254 aa).

STPGR repeat units follow at residues 180–205 (PGPA…MAAR) and 216–241 (PGPG…FGIK). Residues 207-226 (EPPGDKTLKPGPGAHSPEKV) form a disordered region.

This sequence belongs to the CIMAP family. As to quaternary structure, microtubule inner protein component of sperm flagellar doublet microtubules. Testis-specific.

The protein localises to the cytoplasm. It localises to the cytoskeleton. It is found in the flagellum axoneme. Its function is as follows. Outer dense fibers are filamentous structures located on the outside of the axoneme in the midpiece and principal piece of the mammalian sperm tail. May help to maintain the passive elastic structures and elastic recoil of the sperm tail. The chain is Ciliary microtubule associated protein 1A from Homo sapiens (Human).